The primary structure comprises 437 residues: tRNA-2-methylthio-N(6)-dimethylallyladenosine synthase (437 aa).

Residues 5 to 121 (KKLYIKTYGC…LPELTARAAT (117 aa)) form the MTTase N-terminal domain. Residues Cys-14, Cys-50, Cys-84, Cys-159, Cys-163, and Cys-166 each contribute to the [4Fe-4S] cluster site. The Radical SAM core domain occupies 145–371 (AKRGPTAFLT…QALLTRQQRA (227 aa)). A TRAM domain is found at 374 to 436 (DAKVGTTARV…ANSLRGVLIA (63 aa)).

The protein belongs to the methylthiotransferase family. MiaB subfamily. In terms of assembly, monomer. [4Fe-4S] cluster is required as a cofactor.

It is found in the cytoplasm. The enzyme catalyses N(6)-dimethylallyladenosine(37) in tRNA + (sulfur carrier)-SH + AH2 + 2 S-adenosyl-L-methionine = 2-methylsulfanyl-N(6)-dimethylallyladenosine(37) in tRNA + (sulfur carrier)-H + 5'-deoxyadenosine + L-methionine + A + S-adenosyl-L-homocysteine + 2 H(+). Functionally, catalyzes the methylthiolation of N6-(dimethylallyl)adenosine (i(6)A), leading to the formation of 2-methylthio-N6-(dimethylallyl)adenosine (ms(2)i(6)A) at position 37 in tRNAs that read codons beginning with uridine. This is tRNA-2-methylthio-N(6)-dimethylallyladenosine synthase from Dinoroseobacter shibae (strain DSM 16493 / NCIMB 14021 / DFL 12).